The primary structure comprises 287 residues: Bifunctional protein FolD (287 aa).

NADP(+) contacts are provided by residues 165–167, Ser190, and Ile231; that span reads GRS.

This sequence belongs to the tetrahydrofolate dehydrogenase/cyclohydrolase family. As to quaternary structure, homodimer.

It catalyses the reaction (6R)-5,10-methylene-5,6,7,8-tetrahydrofolate + NADP(+) = (6R)-5,10-methenyltetrahydrofolate + NADPH. The enzyme catalyses (6R)-5,10-methenyltetrahydrofolate + H2O = (6R)-10-formyltetrahydrofolate + H(+). The protein operates within one-carbon metabolism; tetrahydrofolate interconversion. In terms of biological role, catalyzes the oxidation of 5,10-methylenetetrahydrofolate to 5,10-methenyltetrahydrofolate and then the hydrolysis of 5,10-methenyltetrahydrofolate to 10-formyltetrahydrofolate. The sequence is that of Bifunctional protein FolD from Carboxydothermus hydrogenoformans (strain ATCC BAA-161 / DSM 6008 / Z-2901).